Here is a 214-residue protein sequence, read N- to C-terminus: Adenylate kinase (214 aa).

10-15 is a binding site for ATP; sequence GAGKGT. The interval 30–59 is NMP; sequence STGDIFRANIKNGTELGKKAKTYMDQGALV. Residues Thr31, Arg36, 57–59, 85–88, and Gln92 contribute to the AMP site; these read ALV and GFPR. The LID stretch occupies residues 126–163; it reads GRRACLNCGATYHIVFNPTKVEGKCDACGADTVLRDDD. Position 127 (Arg127) interacts with ATP. Zn(2+) contacts are provided by Cys130 and Cys133. Position 136 to 137 (136 to 137) interacts with ATP; that stretch reads TY. 2 residues coordinate Zn(2+): Cys150 and Cys153. Positions 160 and 171 each coordinate AMP. Lys199 contributes to the ATP binding site.

It belongs to the adenylate kinase family. In terms of assembly, monomer.

It localises to the cytoplasm. It catalyses the reaction AMP + ATP = 2 ADP. It functions in the pathway purine metabolism; AMP biosynthesis via salvage pathway; AMP from ADP: step 1/1. Functionally, catalyzes the reversible transfer of the terminal phosphate group between ATP and AMP. Plays an important role in cellular energy homeostasis and in adenine nucleotide metabolism. This is Adenylate kinase from Agathobacter rectalis (strain ATCC 33656 / DSM 3377 / JCM 17463 / KCTC 5835 / VPI 0990) (Eubacterium rectale).